We begin with the raw amino-acid sequence, 307 residues long: MAATLRELRGRIRSAGSIKKITKAQELIATSRIAKAQARVEAARPYAAEITNMLTELAGASALDHPLLVERKQPKRAGVLVVSSDRGLCGAYNANVLRRAEELFSLLRDEGKDPVLYVVGRKALGYFSFRQRTVVESWTGFSERPTYENAREIADTLVNAFMAGADDEGDDAGADGILGVDELHIVFTEFRSMLSQTAVARRAAPMEVEYVGEVETGPRTLYSFEPDPETLFDALLPRYIATRVYAALLEAAASESASRRRAMKSATDNADDLIKALTLAANRERQAQITQEISEIVGGANALAGSK.

This sequence belongs to the ATPase gamma chain family. In terms of assembly, F-type ATPases have 2 components, CF(1) - the catalytic core - and CF(0) - the membrane proton channel. CF(1) has five subunits: alpha(3), beta(3), gamma(1), delta(1), epsilon(1). CF(0) has three main subunits: a, b and c.

The protein resides in the cell membrane. Functionally, produces ATP from ADP in the presence of a proton gradient across the membrane. The gamma chain is believed to be important in regulating ATPase activity and the flow of protons through the CF(0) complex. The sequence is that of ATP synthase gamma chain from Mycolicibacterium smegmatis (strain ATCC 700084 / mc(2)155) (Mycobacterium smegmatis).